The following is a 268-amino-acid chain: 3-methyl-2-oxobutanoate hydroxymethyltransferase (268 aa).

Asp44 and Asp83 together coordinate Mg(2+). Residues 44–45 (DS), Asp83, and Lys113 contribute to the 3-methyl-2-oxobutanoate site. Glu115 lines the Mg(2+) pocket. Glu183 acts as the Proton acceptor in catalysis.

It belongs to the PanB family. In terms of assembly, homodecamer; pentamer of dimers. The cofactor is Mg(2+).

The protein resides in the cytoplasm. The catalysed reaction is 3-methyl-2-oxobutanoate + (6R)-5,10-methylene-5,6,7,8-tetrahydrofolate + H2O = 2-dehydropantoate + (6S)-5,6,7,8-tetrahydrofolate. It functions in the pathway cofactor biosynthesis; (R)-pantothenate biosynthesis; (R)-pantoate from 3-methyl-2-oxobutanoate: step 1/2. In terms of biological role, catalyzes the reversible reaction in which hydroxymethyl group from 5,10-methylenetetrahydrofolate is transferred onto alpha-ketoisovalerate to form ketopantoate. This is 3-methyl-2-oxobutanoate hydroxymethyltransferase from Leptospira biflexa serovar Patoc (strain Patoc 1 / Ames).